The primary structure comprises 269 residues: RBPJ-interacting and tubulin-associated protein 1 (269 aa).

The short motif at 5 to 17 (VELAVSGMQTLGL) is the Nuclear export signal element. 2 disordered regions span residues 66 to 105 (VGKE…PISH) and 141 to 269 (LWTP…PPWK). Positions 80-92 (CETTPSRGSTPTL) are enriched in polar residues. The short motif at 92-108 (LTPRKKNKYRPISHTPS) is the Nuclear localization signal element. The tract at residues 128-156 (RMAKGDAAKLRALLWTPPPTPRGSHSPRP) is interaction with RBPJ/RBPSUH. The segment at 156–269 (PREAPLRAIH…ATQKPKPPWK (114 aa)) is interaction with tubulin. Residues 200-253 (HSLTHLNVPSTGHPATSAPHTNGPQDLRPSTSGVTFRSPLVTSRARSVSISVPS) are compositionally biased toward polar residues.

Belongs to the RITA family. Interacts with RBPJ/RBPSUH.

Its subcellular location is the cytoplasm. It localises to the nucleus. The protein resides in the cytoskeleton. It is found in the microtubule organizing center. The protein localises to the centrosome. Functionally, tubulin-binding protein that acts as a negative regulator of Notch signaling pathway. Shuttles between the cytoplasm and the nucleus and mediates the nuclear export of RBPJ/RBPSUH, thereby preventing the interaction between RBPJ/RBPSUH and NICD product of Notch proteins (Notch intracellular domain), leading to down-regulate Notch-mediated transcription. May play a role in neurogenesis. The polypeptide is RBPJ-interacting and tubulin-associated protein 1 (RITA1) (Homo sapiens (Human)).